A 242-amino-acid polypeptide reads, in one-letter code: Polycomb group RING finger protein 3 (242 aa).

Residues 17 to 56 (CRLCSGYLIDATTVTECLHTFCRSCLVKYLEENNTCPTCR) form an RING-type zinc finger. The tract at residues 115 to 149 (AKQHLDSHRNGETKADDSSNKEAAEEKPEEDNDYH) is disordered. Residues 117–140 (QHLDSHRNGETKADDSSNKEAAEE) are compositionally biased toward basic and acidic residues. Residues 132–242 (SSNKEAAEEK…LHYRPKMDLL (111 aa)) are interaction with BCORL1.

Component of a PRC1-like complex that contains PCGF3, RNF2 and RYBP. Interacts with CBX6, CBX7 and CBX8. Interacts with BCORL1.

It localises to the nucleus. Its subcellular location is the nucleoplasm. Functionally, component of a Polycomb group (PcG) multiprotein PRC1-like complex, a complex class required to maintain the transcriptionally repressive state of many genes, including Hox genes, throughout development. PcG PRC1 complex acts via chromatin remodeling and modification of histones; it mediates monoubiquitination of histone H2A 'Lys-119', rendering chromatin heritably changed in its expressibility. Within the PRC1-like complex, regulates RNF2 ubiquitin ligase activity. Plays a redundant role with PCGF5 as part of a PRC1-like complex that mediates monoubiquitination of histone H2A 'Lys-119' on the X chromosome and is required for normal silencing of one copy of the X chromosome in XX females. The protein is Polycomb group RING finger protein 3 (PCGF3) of Homo sapiens (Human).